A 124-amino-acid polypeptide reads, in one-letter code: Small ribosomal subunit protein uS12 (124 aa).

A disordered region spans residues 1–24; it reads MPTINQLIKKPRKSQKEKTASPAL. 3-methylthioaspartic acid is present on Asp89.

It belongs to the universal ribosomal protein uS12 family. As to quaternary structure, part of the 30S ribosomal subunit. Contacts proteins S8 and S17. May interact with IF1 in the 30S initiation complex.

In terms of biological role, with S4 and S5 plays an important role in translational accuracy. Functionally, interacts with and stabilizes bases of the 16S rRNA that are involved in tRNA selection in the A site and with the mRNA backbone. Located at the interface of the 30S and 50S subunits, it traverses the body of the 30S subunit contacting proteins on the other side and probably holding the rRNA structure together. The combined cluster of proteins S8, S12 and S17 appears to hold together the shoulder and platform of the 30S subunit. In Borrelia hermsii (strain HS1 / DAH), this protein is Small ribosomal subunit protein uS12.